The chain runs to 126 residues: Thioredoxin domain-containing protein, mitochondrial (126 aa).

A Thioredoxin domain is found at 14-120 (SQKIATNTSF…ILEFLNHIET (107 aa)).

Belongs to the thioredoxin family.

Its subcellular location is the mitochondrion. The protein is Thioredoxin domain-containing protein, mitochondrial of Dictyostelium discoideum (Social amoeba).